The sequence spans 320 residues: Beta-ketoacyl-[acyl-carrier-protein] synthase III (320 aa).

Residues Cys-114 and His-247 contribute to the active site. The tract at residues 248-252 is ACP-binding; it reads QANRR. The active site involves Asn-277.

It belongs to the thiolase-like superfamily. FabH family. In terms of assembly, homodimer.

It is found in the cytoplasm. It catalyses the reaction malonyl-[ACP] + acetyl-CoA + H(+) = 3-oxobutanoyl-[ACP] + CO2 + CoA. It participates in lipid metabolism; fatty acid biosynthesis. Functionally, catalyzes the condensation reaction of fatty acid synthesis by the addition to an acyl acceptor of two carbons from malonyl-ACP. Catalyzes the first condensation reaction which initiates fatty acid synthesis and may therefore play a role in governing the total rate of fatty acid production. Possesses both acetoacetyl-ACP synthase and acetyl transacylase activities. Its substrate specificity determines the biosynthesis of branched-chain and/or straight-chain of fatty acids. The sequence is that of Beta-ketoacyl-[acyl-carrier-protein] synthase III from Neisseria gonorrhoeae (strain ATCC 700825 / FA 1090).